The primary structure comprises 1430 residues: 3'-5' RNA helicase YTHDC2 (1430 aa).

Residues 1-37 (MSRPSSVSPRQPAPGGGGGGGPSPCGPGGGGRAKGLK) form a disordered region. The span at 14-33 (PGGGGGGGPSPCGPGGGGRA) shows a compositional bias: gly residues. Positions 38-106 (DIRIDEEVKI…NRYLTVKKKD (69 aa)) constitute an R3H domain. The Helicase ATP-binding domain maps to 203 to 369 (VKIIKENKVV…FGSCPVIYIQ (167 aa)). 216-223 (GETGSGKT) is a binding site for ATP. Residues 316–319 (DEVH) carry the DEAH box motif. 2 ANK repeats span residues 506 to 538 (TSAT…SKAS) and 539 to 571 (NGWM…FGNL). One can recognise a Helicase C-terminal domain in the interval 612 to 784 (LLYNICHSCD…ELCLHTKLLA (173 aa)). A phosphoserine mark is found at Ser1089, Ser1090, and Ser1092. A compositionally biased stretch (polar residues) spans 1164–1174 (EQSAGLQQPSG). The interval 1164-1288 (EQSAGLQQPS…SPSPRPNMPV (125 aa)) is disordered. Low complexity predominate over residues 1191–1200 (SSWRSNNSRK). Ser1202 bears the Phosphoserine mark. Positions 1231 to 1249 (KYKDRGILHPKRGTEDRSD) are enriched in basic and acidic residues. Positions 1250–1264 (QSSVKSTDSSSYPSP) are enriched in low complexity. Ser1263, Ser1267, and Ser1281 each carry phosphoserine. The YTH domain occupies 1288–1418 (VRYFIMKSSN…QVGEQLLQLW (131 aa)). Residues 1294–1296 (KSS), Trp1310, and Trp1360 each bind RNA.

Belongs to the DEAD box helicase family. DEAH subfamily. As to quaternary structure, interacts with MEIOC; binds transcripts that regulate the mitotic cell cycle inhibiting progression into metaphase, thereby allowing meiotic prophase to proceed normally. Interacts (via ANK repeats) with XRN1. Interacts with ZCCHC4. Associates with the small ribosomal subunit. Interacts with RBM46.

It localises to the cytoplasm. The protein resides in the perinuclear region. It catalyses the reaction ATP + H2O = ADP + phosphate + H(+). 3'-5' RNA helicase that plays a key role in the male and female germline by promoting transition from mitotic to meiotic divisions in stem cells. Specifically recognizes and binds N6-methyladenosine (m6A)-containing RNAs, a modification present at internal sites of mRNAs and some non-coding RNAs that plays a role in the efficiency of RNA processing and stability. Essential for ensuring a successful progression of the meiotic program in the germline by regulating the level of m6A-containing RNAs. Acts by binding and promoting degradation of m6A-containing mRNAs: the 3'-5' RNA helicase activity is required for this process and RNA degradation may be mediated by XRN1 exoribonuclease. Required for both spermatogenesis and oogenesis. This chain is 3'-5' RNA helicase YTHDC2, found in Pongo abelii (Sumatran orangutan).